Consider the following 1144-residue polypeptide: Type II inositol polyphosphate 5-phosphatase 14 (1144 aa).

Disordered stretches follow at residues 15–67 (ASLV…FDSS) and 81–118 (GRTSGERGNGEECGFVTPPSKPASQGGGNDGGREDDIE). WD repeat units lie at residues 158–196 (ETQTGKFLRNIACTESQLWAGQENGVRFWNLEEAYEVGC), 216–255 (VPTSPALCLLVDHGNRLVWTGHKDGKIRAWKMNQPNTTTA), 269–307 (AHRGPVNYIVISSYGDMWSCSDGGVIKIWTLDSLEKSLV), 445–483 (EDTRKVEAIAIAADGSIWTGSMNGVIAQWDGNGSRLREV), and 524–561 (SHNEPVIKLAAGGGFIFSLATHGGVRGWYVTSPGPLDS). Catalytic stretches follow at residues 791-807 (DLVAFFGDFNYRLFGIT) and 870-885 (KKRIPAWCDRVIYRDN). A Glycyl lysine isopeptide (Lys-Gly) (interchain with G-Cter in ubiquitin) cross-link involves residue Lys-949. A compositionally biased stretch (polar residues) spans 1111–1131 (TTMTKNLEGSTRYQTDANRGG). A disordered region spans residues 1111–1144 (TTMTKNLEGSTRYQTDANRGGSTRHRTDDSTRRG). The segment covering 1135–1144 (HRTDDSTRRG) has biased composition (basic and acidic residues).

Belongs to the inositol polyphosphate 5-phosphatase family. The cofactor is Mg(2+). Expressed in young seedlings and flowers.

It carries out the reaction a 1,2-diacyl-sn-glycero-3-phospho-(1D-myo-inositol-4,5-bisphosphate) + H2O = a 1,2-diacyl-sn-glycero-3-phospho-(1D-myo-inositol 4-phosphate) + phosphate. The enzyme catalyses a 1,2-diacyl-sn-glycero-3-phospho-(1D-myo-inositol-3,4,5-trisphosphate) + H2O = a 1,2-diacyl-sn-glycero-3-phospho-(1D-myo-inositol-3,4-bisphosphate) + phosphate. It catalyses the reaction 1D-myo-inositol 1,4,5-trisphosphate + H2O = 1D-myo-inositol 1,4-bisphosphate + phosphate. In terms of biological role, has phosphatase activity toward PtdIns(4,5)P2, PtdIns(3,4,5)P3 and Ins(1,4,5)P3. This chain is Type II inositol polyphosphate 5-phosphatase 14, found in Arabidopsis thaliana (Mouse-ear cress).